A 234-amino-acid polypeptide reads, in one-letter code: Carboxy-S-adenosyl-L-methionine synthase (234 aa).

Residues Y35, 60–62 (GCS), 83–84 (DN), 109–110 (DI), N124, and R191 contribute to the S-adenosyl-L-methionine site.

The protein belongs to the class I-like SAM-binding methyltransferase superfamily. Cx-SAM synthase family. As to quaternary structure, homodimer.

It catalyses the reaction prephenate + S-adenosyl-L-methionine = carboxy-S-adenosyl-L-methionine + 3-phenylpyruvate + H2O. In terms of biological role, catalyzes the conversion of S-adenosyl-L-methionine (SAM) to carboxy-S-adenosyl-L-methionine (Cx-SAM). The chain is Carboxy-S-adenosyl-L-methionine synthase from Campylobacter hominis (strain ATCC BAA-381 / DSM 21671 / CCUG 45161 / LMG 19568 / NCTC 13146 / CH001A).